The following is a 190-amino-acid chain: Elongation factor P-like protein (190 aa).

Belongs to the elongation factor P family.

This is Elongation factor P-like protein from Cronobacter sakazakii (strain ATCC BAA-894) (Enterobacter sakazakii).